Here is a 908-residue protein sequence, read N- to C-terminus: Protein translocase subunit SecA (908 aa).

ATP-binding positions include Gln-87, 105–109 (GEGKT), and Asp-512. Positions 860–908 (AESLVGSSDEHEAVTAQAPMIRDGEKVGRNDPCPCGSGRKYKQCHGKLS) are disordered. Zn(2+) contacts are provided by Cys-892, Cys-894, Cys-903, and His-904. Residues 898–908 (RKYKQCHGKLS) show a composition bias toward basic residues.

This sequence belongs to the SecA family. Monomer and homodimer. Part of the essential Sec protein translocation apparatus which comprises SecA, SecYEG and auxiliary proteins SecDF-YajC and YidC. Zn(2+) is required as a cofactor.

The protein resides in the cell inner membrane. The protein localises to the cytoplasm. The enzyme catalyses ATP + H2O + cellular proteinSide 1 = ADP + phosphate + cellular proteinSide 2.. Part of the Sec protein translocase complex. Interacts with the SecYEG preprotein conducting channel. Has a central role in coupling the hydrolysis of ATP to the transfer of proteins into and across the cell membrane, serving both as a receptor for the preprotein-SecB complex and as an ATP-driven molecular motor driving the stepwise translocation of polypeptide chains across the membrane. This is Protein translocase subunit SecA from Shewanella baltica (strain OS155 / ATCC BAA-1091).